The sequence spans 494 residues: Glutamate--tRNA ligase (494 aa).

Residues 10 to 20 (PSPTGDPHVGT) carry the 'HIGH' region motif. 4 residues coordinate Zn(2+): Cys107, Cys109, Cys134, and His136. The 'KMSKS' region signature appears at 251–255 (KLSKR). Lys254 lines the ATP pocket.

The protein belongs to the class-I aminoacyl-tRNA synthetase family. Glutamate--tRNA ligase type 1 subfamily. In terms of assembly, monomer. Zn(2+) serves as cofactor.

The protein localises to the cytoplasm. The enzyme catalyses tRNA(Glu) + L-glutamate + ATP = L-glutamyl-tRNA(Glu) + AMP + diphosphate. Functionally, catalyzes the attachment of glutamate to tRNA(Glu) in a two-step reaction: glutamate is first activated by ATP to form Glu-AMP and then transferred to the acceptor end of tRNA(Glu). The polypeptide is Glutamate--tRNA ligase (Pseudomonas aeruginosa (strain UCBPP-PA14)).